The chain runs to 216 residues: uncharacterized protein (216 aa).

It belongs to the channel forming colicin family.

This is an uncharacterized protein from Escherichia coli.